The primary structure comprises 468 residues: MSRSNAHLNPLECTQQALHWIHSDTLSPDDMAALNQEVLSCFREYVNPGFLEYRKSVTTGGDYGAVEWRASGPNTLIDTQGNEYLDCLGGYGIFNVGHRNPNVIAAVESQLARQPLHSQELLDPLRGLLAKTLAALTPGNLKYSFFSNSGTESVEAALKLAKAYQSPRGKYTFIAATGAFHGKSLGALSATAKPAFRRPFMPLLPGFHHVAFGDISAMRKQVQQCQKTGDDVAAIILEPIQGEGGVIVPPENYLPAVRALCDEVGALLILDEVQTGMGRTGKMFACEHYGVQPDILCLAKALGGGVMPIGATVATEAVFSVLFENPFLHTTTFGGNPLACAAALATVNELLTKNLPEQAAIQGEFLLQGLQQLAAEYPQLIIEARGMGLLQAIEFRKNEIGYAFAKELFQRNILVAGTLNNSKSVRIEPPLTITREQCARVLKEAKDVLKKLNGTMPDENKMKEYAVE.

Pyridoxal 5'-phosphate contacts are provided by residues 150 to 151 (GT) and Gln274. Lys300 is modified (N6-(pyridoxal phosphate)lysine). Thr332 lines the pyridoxal 5'-phosphate pocket.

It belongs to the class-III pyridoxal-phosphate-dependent aminotransferase family. Putrescine aminotransferase subfamily. The cofactor is pyridoxal 5'-phosphate.

The enzyme catalyses an alkane-alpha,omega-diamine + 2-oxoglutarate = an omega-aminoaldehyde + L-glutamate. The catalysed reaction is putrescine + 2-oxoglutarate = 1-pyrroline + L-glutamate + H2O. It catalyses the reaction cadaverine + 2-oxoglutarate = 5-aminopentanal + L-glutamate. The protein operates within amine and polyamine degradation; putrescine degradation; 4-aminobutanal from putrescine (transaminase route): step 1/1. Functionally, catalyzes the aminotransferase reaction from putrescine to 2-oxoglutarate, leading to glutamate and 4-aminobutanal, which spontaneously cyclizes to form 1-pyrroline. This is the first step in one of two pathways for putrescine degradation, where putrescine is converted into 4-aminobutanoate (gamma-aminobutyrate or GABA) via 4-aminobutanal. Also functions as a cadaverine transaminase in a a L-lysine degradation pathway to succinate that proceeds via cadaverine, glutarate and L-2-hydroxyglutarate. The polypeptide is Putrescine aminotransferase (Pectobacterium atrosepticum (strain SCRI 1043 / ATCC BAA-672) (Erwinia carotovora subsp. atroseptica)).